Consider the following 427-residue polypeptide: Enolase (427 aa).

Residue Q163 participates in (2R)-2-phosphoglycerate binding. E205 functions as the Proton donor in the catalytic mechanism. Mg(2+) is bound by residues D242, E285, and D312. Residues K337, R366, S367, and K388 each coordinate (2R)-2-phosphoglycerate. The Proton acceptor role is filled by K337.

This sequence belongs to the enolase family. Requires Mg(2+) as cofactor.

It localises to the cytoplasm. The protein localises to the secreted. Its subcellular location is the cell surface. It carries out the reaction (2R)-2-phosphoglycerate = phosphoenolpyruvate + H2O. It functions in the pathway carbohydrate degradation; glycolysis; pyruvate from D-glyceraldehyde 3-phosphate: step 4/5. Its function is as follows. Catalyzes the reversible conversion of 2-phosphoglycerate (2-PG) into phosphoenolpyruvate (PEP). It is essential for the degradation of carbohydrates via glycolysis. The polypeptide is Enolase (Ralstonia pickettii (strain 12J)).